We begin with the raw amino-acid sequence, 117 residues long: Immunoglobulin heavy variable 1-24 (117 aa).

The signal sequence occupies residues 1 to 19; sequence MDCTWRILFLVAAATGTHA. Residues 20-44 form a framework-1 region; it reads QVQLVQSGAEVKKPGASVKVSCKVS. The region spanning 20–117 is the Ig-like domain; that stretch reads QVQLVQSGAE…EDTAVYYCAT (98 aa). Cys-41 and Cys-115 form a disulfide bridge. The interval 45–52 is complementarity-determining-1; the sequence is GYTLTELS. The framework-2 stretch occupies residues 53-69; sequence MHWVRQAPGKGLEWMGG. Residues 70–77 are complementarity-determining-2; sequence FDPEDGET. Residues 78–115 form a framework-3 region; that stretch reads IYAQKFQGRVTMTEDTSTDTAYMELSSLRSEDTAVYYC. The complementarity-determining-3 stretch occupies residues 116 to 117; the sequence is AT.

Immunoglobulins are composed of two identical heavy chains and two identical light chains; disulfide-linked.

It is found in the secreted. The protein localises to the cell membrane. In terms of biological role, v region of the variable domain of immunoglobulin heavy chains that participates in the antigen recognition. Immunoglobulins, also known as antibodies, are membrane-bound or secreted glycoproteins produced by B lymphocytes. In the recognition phase of humoral immunity, the membrane-bound immunoglobulins serve as receptors which, upon binding of a specific antigen, trigger the clonal expansion and differentiation of B lymphocytes into immunoglobulins-secreting plasma cells. Secreted immunoglobulins mediate the effector phase of humoral immunity, which results in the elimination of bound antigens. The antigen binding site is formed by the variable domain of one heavy chain, together with that of its associated light chain. Thus, each immunoglobulin has two antigen binding sites with remarkable affinity for a particular antigen. The variable domains are assembled by a process called V-(D)-J rearrangement and can then be subjected to somatic hypermutations which, after exposure to antigen and selection, allow affinity maturation for a particular antigen. This Homo sapiens (Human) protein is Immunoglobulin heavy variable 1-24.